Reading from the N-terminus, the 954-residue chain is Protein teashirt (954 aa).

Disordered regions lie at residues 20–91, 167–207, and 276–331; these read LPTA…SLPS, ESAE…PQLG, and VKGG…GSGA. The segment covering 47-57 has biased composition (gly residues); it reads HGGGAGSGGVG. The segment covering 292–303 has biased composition (polar residues); sequence SKATTPQAASQP. Gly residues predominate over residues 318-328; sequence SGGGSGGGAAG. The C2H2-type 1 zinc finger occupies 354–378; sequence FRCVWCKQSFPTLEALTTHMKDSKH. The tract at residues 383-444 is disordered; that stretch reads VPPFGNLPSN…YRGDPPTPLP (62 aa). Over residues 417-428 the composition is skewed to low complexity; it reads SGSASNHSPSAN. C2H2-type zinc fingers lie at residues 466 to 490 and 533 to 557; these read LKCM…ETQH and LTCK…KNNH. 3 disordered regions span residues 563–622, 689–714, and 748–935; these read LQSA…DKND, FDTP…TSPV, and TSSE…NLTA. Over residues 568-578 the composition is skewed to basic residues; the sequence is ARKRPAPKKRE. Basic and acidic residues predominate over residues 579-588; that stretch reads KSLPVRKLLE. Residues 696–712 are compositionally biased toward low complexity; that stretch reads ASLPASSPSNSSTKNTS. 2 positions are modified to phosphoserine: S750 and S758. Residues 778–807 show a composition bias toward basic and acidic residues; the sequence is GHDEESSKPAIKQEREAESKPVKMEIKSEF. Residues 842–851 show a composition bias toward low complexity; it reads PKTPSSAASP. Composition is skewed to polar residues over residues 862 to 885 and 893 to 907; these read AESQ…GSSE and DSLN…SLGS. Residues 910-926 are compositionally biased toward low complexity; sequence AGANSRAKLAAAAAAGG.

It belongs to the teashirt C2H2-type zinc-finger protein family. In terms of assembly, binds arm. As to expression, shows a dynamic expression pattern during embryogenesis. Expressed in the embryonic trunk region (PS 3-13) with expression strongest in the thoracic segments. Expressed in a small group of cells corresponding to the anal tuft from stage 14. Strongly expressed in the embryonic ventral nerve cord. Also expressed in the proximal domain of the leg imaginal disk and in the region of the wing disk that will give rise to the proximal wing hinge. Expressed at high levels in the anterior and central embryonic midgut mesoderm and in the embryonic midgut endoderm. Expressed at a low level in more posterior visceral mesoderm of the gut. From stage 12 onwards, tsh and tio are colocalized in some cells of the CNS, trunk epidermis, hindgut and Malpighian tubules.

The protein localises to the nucleus. The protein resides in the cytoplasm. In terms of biological role, homeotic protein that acts downstream of Arm in the Wg cascade during embryogenesis to determine segment identity throughout the entire trunk. Acts cooperatively with other trunk homeotic proteins to repress head homeotic genes and therefore repress head segmental identity. Necessary, in combination with Scr, for the formation of the prothoracic segment. Promotes eye development in the dorsal region of the eye disk and suppresses eye development in the ventral region in combination with Wg-signaling and several early dorso-ventral eye patterning genes. Required for proper development of proximal leg segments. Has differential functions along the dorso-ventral axs of the antennal and leg disks. May play a role in wing hinge development. Possible involvement in chromatin structure for modulation of transcription. Binds DNA and can act as both a transcriptional repressor and activator. Positively regulates its own expression as well as that of Dll. Negatively regulates the expression of mod. Required for Wg-mediated transcriptional repression of Ubx in the midgut. Also represses transcription of lab in the midgut and is necessary for the proper formation of anterior and central midgut structures. Tiptop (tio) and teashirt (tsh) have, on the whole, common activities. Tio and tsh repress each other's expression and tsh has a crucial role for trunk patterning that is in part masked by ectopic expression of tiptop. Both genes share a common activity required for the activation of Ser and svb and the maintenance of en and wg. This is Protein teashirt (tsh) from Drosophila melanogaster (Fruit fly).